Here is a 249-residue protein sequence, read N- to C-terminus: Putative S-adenosyl-L-methionine-dependent methyltransferase Mjls_0570 (249 aa).

S-adenosyl-L-methionine is bound by residues Asp111 and Asp141–Leu142.

It belongs to the UPF0677 family.

Its function is as follows. Exhibits S-adenosyl-L-methionine-dependent methyltransferase activity. This is Putative S-adenosyl-L-methionine-dependent methyltransferase Mjls_0570 from Mycobacterium sp. (strain JLS).